The primary structure comprises 102 residues: UPF0235 protein Swol_0959 (102 aa).

The protein belongs to the UPF0235 family.

This is UPF0235 protein Swol_0959 from Syntrophomonas wolfei subsp. wolfei (strain DSM 2245B / Goettingen).